The sequence spans 597 residues: DNA mismatch repair protein MutL (597 aa).

The protein belongs to the DNA mismatch repair MutL/HexB family.

Its function is as follows. This protein is involved in the repair of mismatches in DNA. It is required for dam-dependent methyl-directed DNA mismatch repair. May act as a 'molecular matchmaker', a protein that promotes the formation of a stable complex between two or more DNA-binding proteins in an ATP-dependent manner without itself being part of a final effector complex. In Rhodopseudomonas palustris (strain HaA2), this protein is DNA mismatch repair protein MutL.